We begin with the raw amino-acid sequence, 391 residues long: Na(+)/H(+) antiporter NhaA 1 (391 aa).

The next 11 helical transmembrane spans lie at 25–45, 56–76, 98–118, 128–148, 157–177, 180–200, 208–228, 264–284, 297–317, 335–355, and 364–384; these read AGGI…NSPL, VWLG…IFFL, ALPG…YIAI, GWAI…SLLG, VFLA…IAFF, AGLN…LIVM, LLPY…SGVH, VAFA…LAGI, VALG…VLAI, GVAM…NLAF, and EVKV…IVLL.

It belongs to the NhaA Na(+)/H(+) (TC 2.A.33) antiporter family.

It is found in the cell inner membrane. The enzyme catalyses Na(+)(in) + 2 H(+)(out) = Na(+)(out) + 2 H(+)(in). In terms of biological role, na(+)/H(+) antiporter that extrudes sodium in exchange for external protons. This Pseudomonas syringae pv. syringae (strain B728a) protein is Na(+)/H(+) antiporter NhaA 1.